The following is an 858-amino-acid chain: RNA-directed RNA polymerase 2a (858 aa).

The region spanning 511 to 624 (KHCLEIDLSK…FSVLPPVGDP (114 aa)) is the RdRp catalytic domain. The tract at residues 772 to 830 (TKQRKKKDGIERRRDDKRRTPTGSYGGGEEAETKVSQAESTGTRSQKSQREGAFKSQAV) is disordered. The segment covering 779-790 (DGIERRRDDKRR) has biased composition (basic and acidic residues). The segment covering 805 to 817 (KVSQAESTGTRSQ) has biased composition (polar residues).

It belongs to the ssRNA positive-strand viruses RNA-directed RNA polymerase family. Interacts with replication protein 1a.

It carries out the reaction RNA(n) + a ribonucleoside 5'-triphosphate = RNA(n+1) + diphosphate. Its function is as follows. RNA-dependent RNA polymerase which replicates the viral genome composed of 3 RNA segments, RNA1, RNA2 and RNA3. The sequence is that of RNA-directed RNA polymerase 2a from Cucumis sativus (Cucumber).